The chain runs to 285 residues: Probable endonuclease 4 (285 aa).

Positions 69, 109, 145, 179, 182, 216, 229, 231, and 261 each coordinate Zn(2+).

Belongs to the AP endonuclease 2 family. Requires Zn(2+) as cofactor.

The catalysed reaction is Endonucleolytic cleavage to 5'-phosphooligonucleotide end-products.. In terms of biological role, endonuclease IV plays a role in DNA repair. It cleaves phosphodiester bonds at apurinic or apyrimidinic (AP) sites, generating a 3'-hydroxyl group and a 5'-terminal sugar phosphate. The sequence is that of Probable endonuclease 4 from Salmonella paratyphi C (strain RKS4594).